The sequence spans 245 residues: Demethylmenaquinone methyltransferase (245 aa).

Residues Thr-69, Asp-90, and 118–119 contribute to the S-adenosyl-L-methionine site; that span reads DC.

The protein belongs to the class I-like SAM-binding methyltransferase superfamily. MenG/UbiE family.

The catalysed reaction is a 2-demethylmenaquinol + S-adenosyl-L-methionine = a menaquinol + S-adenosyl-L-homocysteine + H(+). Its pathway is quinol/quinone metabolism; menaquinone biosynthesis; menaquinol from 1,4-dihydroxy-2-naphthoate: step 2/2. In terms of biological role, methyltransferase required for the conversion of demethylmenaquinol (DMKH2) to menaquinol (MKH2). This Porphyromonas gingivalis (strain ATCC 33277 / DSM 20709 / CIP 103683 / JCM 12257 / NCTC 11834 / 2561) protein is Demethylmenaquinone methyltransferase.